Reading from the N-terminus, the 108-residue chain is uncharacterized protein (108 aa).

This is an uncharacterized protein from Enterobacteria phage T4 (Bacteriophage T4).